The primary structure comprises 657 residues: uncharacterized protein (657 aa).

Serine 114 is modified (phosphoserine). 5 disordered regions span residues 142-216, 228-248, 291-312, 335-354, and 399-522; these read LASQ…SDEE, SSRE…EEEE, STRS…SHTP, SSPG…EGAD, and AEAS…SGRH. Residues 143–169 show a composition bias toward polar residues; sequence ASQNTDKTSQNQARELPVTENNAQNAK. Over residues 190-206 the composition is skewed to basic and acidic residues; that stretch reads AGKERTLQTPKQKEPAR. Serine 213 bears the Phosphoserine mark. 2 stretches are compositionally biased toward polar residues: residues 234 to 243 and 301 to 312; these read TNQGFSSANV and SHVSSDTASHTP. Residues 343–354 show a composition bias toward acidic residues; sequence ETVDEPVSEGAD. Low complexity predominate over residues 437–451; it reads SASSASAIQQDSTSS. The span at 462–484 shows a compositional bias: polar residues; it reads NTVSSAYSEDFENSPSLTASEPT. Over residues 485 to 495 the composition is skewed to basic and acidic residues; that stretch reads AHSKESLDRTL. Over residues 499-513 the composition is skewed to polar residues; sequence SESSSSVKTDLPQTA.

This is an uncharacterized protein from Homo sapiens (Human).